Consider the following 351-residue polypeptide: Paired box protein 2 homolog (351 aa).

Positions 91–217 (SHTGVNQLGG…SSINRIVRNK (127 aa)) form a DNA-binding region, paired. Positions 94-150 (GVNQLGGVFVNGRPLPDTIRAQIVEMSQHGTRPCDISRQLKVSHGCVSKILGRYYST) are PAI subdomain. The RED subdomain stretch occupies residues 169 to 217 (RVVECIAGYKRANPTMFAWEIRQKLIEDQICGEENVPSVSSINRIVRNK). Residues 226–246 (PTSVTPSVARPSSATSQNQRS) are compositionally biased toward polar residues. The tract at residues 226 to 258 (PTSVTPSVARPSSATSQNQRSPPRGVQQHMQQS) is disordered.

The protein localises to the nucleus. The protein resides in the chromosome. Functionally, transcription factor. Involved in negatively modulating apoptosis in germline and somatic cells, acting in partial redundancy with transcription factor egl-38/PAX5, probably by directly regulating transcription of apoptosis regulator ced-9. May bind to the DNA sequence motif 5'-GTAACG-3' in regulatory elements. The protein is Paired box protein 2 homolog of Caenorhabditis elegans.